Consider the following 526-residue polypeptide: DDB1- and CUL4-associated factor 17 (526 aa).

The next 2 helical transmembrane spans lie at 200–220 (ILMR…MLEI) and 237–257 (GVLA…EYIV).

Its subcellular location is the membrane. The protein resides in the nucleus. The protein localises to the nucleolus. It functions in the pathway protein modification; protein ubiquitination. In terms of biological role, may function as a substrate receptor for CUL4-DDB1 E3 ubiquitin-protein ligase complex. This chain is DDB1- and CUL4-associated factor 17 (dcaf17), found in Danio rerio (Zebrafish).